A 684-amino-acid chain; its full sequence is Probable pectin methyltransferase QUA2 (684 aa).

The segment at 1-35 (MSMPLQRGISGVRVSDSSDDLRDSQMKDKTERARS) is disordered. At 1-86 (MSMPLQRGIS…RHRLMLLFLK (86 aa)) the chain is on the cytoplasmic side. Residues 19–35 (DDLRDSQMKDKTERARS) are compositionally biased toward basic and acidic residues. A helical; Signal-anchor for type II membrane protein membrane pass occupies residues 87 to 107 (ISLVLIVVIALAGSFWWTISI). At 108-684 (STSSRGHVYH…QKPFTKRQSI (577 aa)) the chain is on the lumenal side. N-linked (GlcNAc...) asparagine glycans are attached at residues asparagine 161 and asparagine 476.

The protein belongs to the methyltransferase superfamily. Ubiquitous.

Its subcellular location is the golgi apparatus membrane. The protein operates within glycan metabolism; pectin biosynthesis. Functionally, may be involved in the synthesis of homogalacturonan. Required for normal cell adhesion and plant development. This Arabidopsis thaliana (Mouse-ear cress) protein is Probable pectin methyltransferase QUA2 (QUA2).